Consider the following 427-residue polypeptide: Ribosomal protein uS12 methylthiotransferase RimO (427 aa).

The region spanning Met-1–Ile-116 is the MTTase N-terminal domain. 6 residues coordinate [4Fe-4S] cluster: Cys-10, Cys-46, Cys-79, Cys-145, Cys-149, and Cys-152. One can recognise a Radical SAM core domain in the interval Val-131–Glu-360. One can recognise a TRAM domain in the interval Glu-363 to Glu-426.

It belongs to the methylthiotransferase family. RimO subfamily. The cofactor is [4Fe-4S] cluster.

It localises to the cytoplasm. It carries out the reaction L-aspartate(89)-[ribosomal protein uS12]-hydrogen + (sulfur carrier)-SH + AH2 + 2 S-adenosyl-L-methionine = 3-methylsulfanyl-L-aspartate(89)-[ribosomal protein uS12]-hydrogen + (sulfur carrier)-H + 5'-deoxyadenosine + L-methionine + A + S-adenosyl-L-homocysteine + 2 H(+). Catalyzes the methylthiolation of an aspartic acid residue of ribosomal protein uS12. The polypeptide is Ribosomal protein uS12 methylthiotransferase RimO (Thermosipho africanus (strain TCF52B)).